A 158-amino-acid polypeptide reads, in one-letter code: Large ribosomal subunit protein uL15 (158 aa).

The span at methionine 1–threonine 13 shows a compositional bias: basic and acidic residues. Residues methionine 1–alanine 45 form a disordered region. Residues arginine 21–valine 35 are compositionally biased toward gly residues.

It belongs to the universal ribosomal protein uL15 family. In terms of assembly, part of the 50S ribosomal subunit.

Its function is as follows. Binds to the 23S rRNA. This is Large ribosomal subunit protein uL15 from Rhizobium johnstonii (strain DSM 114642 / LMG 32736 / 3841) (Rhizobium leguminosarum bv. viciae).